A 621-amino-acid chain; its full sequence is Phosphomethylpyrimidine synthase (621 aa).

Residues 1–23 show a composition bias toward low complexity; it reads MTAPFLSSLSPTSPLASATAPFP. Positions 1-29 are disordered; that stretch reads MTAPFLSSLSPTSPLASATAPFPGSRKVY. Residues Asn215, Met244, Tyr273, His309, 329–331, 370–373, and Glu409 contribute to the substrate site; these read SRG and DGLR. His413 provides a ligand contact to Zn(2+). Substrate is bound at residue Tyr436. His477 is a binding site for Zn(2+). [4Fe-4S] cluster contacts are provided by Cys557, Cys560, and Cys565.

This sequence belongs to the ThiC family. As to quaternary structure, homodimer. [4Fe-4S] cluster is required as a cofactor.

The catalysed reaction is 5-amino-1-(5-phospho-beta-D-ribosyl)imidazole + S-adenosyl-L-methionine = 4-amino-2-methyl-5-(phosphooxymethyl)pyrimidine + CO + 5'-deoxyadenosine + formate + L-methionine + 3 H(+). The protein operates within cofactor biosynthesis; thiamine diphosphate biosynthesis. Its function is as follows. Catalyzes the synthesis of the hydroxymethylpyrimidine phosphate (HMP-P) moiety of thiamine from aminoimidazole ribotide (AIR) in a radical S-adenosyl-L-methionine (SAM)-dependent reaction. This chain is Phosphomethylpyrimidine synthase, found in Rhodospirillum rubrum (strain ATCC 11170 / ATH 1.1.1 / DSM 467 / LMG 4362 / NCIMB 8255 / S1).